The sequence spans 292 residues: mRNA export protein 33 (292 aa).

Residues 1-76 (MPPKKAAKGK…RKRREEEKRA (76 aa)) are disordered. Basic and acidic residues-rich tracts occupy residues 9 to 26 (GKGDPGKAAKKDPTKKAA) and 58 to 76 (KDAKRQEALRKRREEEKRA). The C3H1-type zinc finger occupies 134 to 172 (INTDIVCKFFLEACETGKYGWLWQCPNGNMTCIYKHALP).

It is found in the cytoplasm. In terms of biological role, functions as a component of the nuclear pore complex (NPC). NPC components, collectively referred to as nucleoporins (NUPs), can play the role of both NPC structural components and of docking or interaction partners for transiently associated nuclear transport factors. Active directional transport is assured by both, a Phe-Gly (FG) repeat affinity gradient for these transport factors across the NPC and a transport cofactor concentration gradient across the nuclear envelope. Involved in the export of mRNA from the nucleus to the cytoplasm. May play a role in mitotic spindle formation and/or function. The polypeptide is mRNA export protein 33 (mep33) (Schizosaccharomyces pombe (strain 972 / ATCC 24843) (Fission yeast)).